The chain runs to 198 residues: MHYPEPISKLIDSFMKLPGIGPKTAVRLAFFVLDMKEDDVLDFAKSLVNAKRNLTYCSVCGHITDRDPCYICDDSHRDQSVVCVVQEPKDVIAMEKMKEYQGVYHVLRGAISPMEGIGPEDINIPQLLKRLQDETVQEVILATNPNIEGEATAMYISRLLKPTGIKVTRIAHGLPVGGDLEYADEVTLSKALEGRREV.

Residues Cys57 to Cys72 form a C4-type zinc finger. One can recognise a Toprim domain in the interval Ser80–Pro175.

The protein belongs to the RecR family.

May play a role in DNA repair. It seems to be involved in an RecBC-independent recombinational process of DNA repair. It may act with RecF and RecO. The protein is Recombination protein RecR of Bacillus cytotoxicus (strain DSM 22905 / CIP 110041 / 391-98 / NVH 391-98).